The chain runs to 1298 residues: Histone-lysine N-methyltransferase EHMT1 (1298 aa).

Disordered regions lie at residues 1-111 and 144-192; these read MAAA…HVTA and ASSL…RKLP. Ala2 carries the post-translational modification N-acetylalanine. A Glycyl lysine isopeptide (Lys-Gly) (interchain with G-Cter in SUMO1); alternate cross-link involves residue Lys22. Lys22 participates in a covalent cross-link: Glycyl lysine isopeptide (Lys-Gly) (interchain with G-Cter in SUMO2); alternate. Residues 38–50 show a composition bias toward basic and acidic residues; sequence SAEKQAGEAHMAA. Composition is skewed to polar residues over residues 54–67 and 76–89; these read TNGS…SSHA and SARV…NTLT. Positions 96-105 are enriched in basic and acidic residues; it reads VSERDSEAAK. Glycyl lysine isopeptide (Lys-Gly) (interchain with G-Cter in SUMO2) cross-links involve residues Lys190, Lys199, Lys231, Lys234, Lys317, and Lys327. Positions 211-234 are disordered; that stretch reads VVGLHAASKDPREVREARDHKEPK. Positions 217-234 are enriched in basic and acidic residues; it reads ASKDPREVREARDHKEPK. Residues 339–479 form a disordered region; it reads VNGESLEMDS…QTAPGDSTGY (141 aa). Acidic residues predominate over residues 344–360; sequence LEMDSDEDDSEELEEDD. Residues 373–393 are compositionally biased toward basic and acidic residues; the sequence is EDSRTSKESMSEADRAQKMDG. The segment covering 394 to 416 has biased composition (acidic residues); it reads ESEEEQESVDTGEEEEGGDESDL. Lys432 is covalently cross-linked (Glycyl lysine isopeptide (Lys-Gly) (interchain with G-Cter in SUMO2)). Ser435 carries the phosphoserine modification. Over residues 440 to 452 the composition is skewed to basic residues; sequence PARKRRRRSRKKP. Polar residues predominate over residues 460 to 474; sequence SYKSSAGSAEQTAPG. A Phosphoserine modification is found at Ser483. Residues Lys492, Lys559, Lys644, Lys659, Lys684, and Lys731 each participate in a glycyl lysine isopeptide (Lys-Gly) (interchain with G-Cter in SUMO2) cross-link. The tract at residues 644-717 is disordered; sequence KADTTSTVTP…TPGLSQGPGK (74 aa). ANK repeat units lie at residues 737-766, 772-801, 805-834, 838-868, 872-901, 905-934, 938-967, and 971-1004; these read FHPK…DPNF, NKRS…NIDT, DQRT…LVDP, EGST…DVNC, GGWT…DINI, EENI…DLHA, HGDS…DVTL, and EGET…DRPS. Positions 905–907 are histone H3K9me binding; sequence EEN. 2 positions are modified to phosphoserine: Ser1004 and Ser1048. Residues 1060-1123 enclose the Pre-SET domain; it reads QYCVCIDDCS…NCRNRVVQNG (64 aa). Zn(2+)-binding residues include Cys1062, Cys1064, Cys1068, Cys1073, Cys1075, Cys1105, Cys1109, Cys1111, and Cys1115. One can recognise an SET domain in the interval 1126–1243; that stretch reads ARLQLYRTRD…AGEQLGFDYG (118 aa). S-adenosyl-L-methionine is bound by residues 1136–1138, Tyr1173, and 1200–1201; these read MGW and NH. An interaction with histone H3 region spans residues 1162–1181; it reads DSEADVREEDSYLFDLDNKD. Residue Cys1203 coordinates Zn(2+). An interaction with histone H3 region spans residues 1242 to 1245; that stretch reads YGER. Cys1256 serves as a coordination point for Zn(2+). Arg1257 lines the S-adenosyl-L-methionine pocket. Zn(2+) is bound by residues Cys1258 and Cys1263. The tract at residues 1274–1298 is disordered; the sequence is QASAAQEAQEDGLPDTSSAAAADPL.

It belongs to the class V-like SAM-binding methyltransferase superfamily. Heterodimer; heterodimerizes with EHMT2. Interacts with WIZ and EHMT2. Part of the E2F6.com-1 complex in G0 phase composed of E2F6, MGA, MAX, TFDP1, CBX3, BAT8, EHMT1, RING1, RNF2, MBLR, L3MBTL2 and YAF2. Interacts (via ANK repeats) with RELA (when monomethylated at 'Lys-310'). Interacts with MPHOSPH8. Interacts with CDYL. Interacts with REST only in the presence of CDYL. Part of a complex containing at least CDYL, REST, WIZ, SETB1, EHMT1 and EHMT2. Interacts with BAZ2B. Widely expressed.

It localises to the nucleus. The protein localises to the chromosome. The enzyme catalyses N(6)-methyl-L-lysyl(9)-[histone H3] + S-adenosyl-L-methionine = N(6),N(6)-dimethyl-L-lysyl(9)-[histone H3] + S-adenosyl-L-homocysteine + H(+). It carries out the reaction L-lysyl(9)-[histone H3] + S-adenosyl-L-methionine = N(6)-methyl-L-lysyl(9)-[histone H3] + S-adenosyl-L-homocysteine + H(+). Methyltransferase activity is inhibited by BIX-01294. Efficiently inhibited by compound E72, a BIX-01294 derivative in which the diazepane ring and the benzyl are replaced with a 3-dimethylaminopropyl and a 5-aminopentyl group at sites B and C, respectively. Histone methyltransferase that specifically mono- and dimethylates 'Lys-9' of histone H3 (H3K9me1 and H3K9me2, respectively) in euchromatin. H3K9me represents a specific tag for epigenetic transcriptional repression by recruiting HP1 proteins to methylated histones. Also weakly methylates 'Lys-27' of histone H3 (H3K27me). Also required for DNA methylation, the histone methyltransferase activity is not required for DNA methylation, suggesting that these 2 activities function independently. Probably targeted to histone H3 by different DNA-binding proteins like E2F6, MGA, MAX and/or DP1. During G0 phase, it probably contributes to silencing of MYC- and E2F-responsive genes, suggesting a role in G0/G1 transition in cell cycle. In addition to the histone methyltransferase activity, also methylates non-histone proteins: mediates dimethylation of 'Lys-373' of p53/TP53. Represses the expression of mitochondrial function-related genes, perhaps by occupying their promoter regions, working in concert with probable chromatin reader BAZ2B. The protein is Histone-lysine N-methyltransferase EHMT1 (EHMT1) of Homo sapiens (Human).